A 200-amino-acid chain; its full sequence is LHFPL tetraspan subfamily member 6 protein (200 aa).

The signal sequence occupies residues 1–21; the sequence is MASSLTCTGVIWALLSFLCAA. 3 helical membrane passes run 84–104, 123–143, and 166–186; these read ICTI…LTAL, GIQF…PLGW, and IGWA…LCTW.

This sequence belongs to the LHFP family. Pancreas, kidney, skeletal muscle, liver, lung brain, heart, colon, small intestine, uterus, testis, prostate, thymus, spleen and placenta.

It localises to the membrane. The sequence is that of LHFPL tetraspan subfamily member 6 protein from Homo sapiens (Human).